Here is a 170-residue protein sequence, read N- to C-terminus: Photosystem I assembly protein Ycf3 (170 aa).

TPR repeat units lie at residues 35-68 (AFTYYRDGMLAQSEGNYAEALQNYYEATRLEIDP), 72-105 (SYILYNIGLIHTSNGEHTKALEYYFRALERNPFL), and 120-153 (GEQAILQGDSEIAEAWFDQAAEYWKQAIALTPGN).

The protein belongs to the Ycf3 family.

The protein localises to the plastid. It localises to the chloroplast thylakoid membrane. Essential for the assembly of the photosystem I (PSI) complex. May act as a chaperone-like factor to guide the assembly of the PSI subunits. The chain is Photosystem I assembly protein Ycf3 from Agrostis stolonifera (Creeping bentgrass).